Consider the following 621-residue polypeptide: Stimulated by retinoic acid gene 6 protein-like (621 aa).

Residues 1 to 21 lie on the Extracellular side of the membrane; the sequence is MLAASTRTRQINITCDNPVDR. N12 carries N-linked (GlcNAc...) asparagine glycosylation. Residues 22 to 42 form a helical membrane-spanning segment; the sequence is EVFLHYSLIPSLCIILVLSFL. Topologically, residues 43–53 are cytoplasmic; that stretch reads QRREHRRQRDD. A helical membrane pass occupies residues 54–74; it reads TSYLLGNHFGIIVPLDFVGTF. Over 75–110 the chain is Extracellular; it reads SNRWSYGAAFGATANKVMFLFSEGYQPLTVPQWAQA. A helical transmembrane segment spans residues 111–131; it reads FVLFIGGMEVGLSYFPFFACL. Over 132–137 the chain is Cytoplasmic; that stretch reads SSEFQL. The helical transmembrane segment at 138–158 threads the bilayer; the sequence is VSSILGFSYSLTWFVVTVLQI. The Extracellular portion of the chain corresponds to 159–173; the sequence is SQCPHGQFLGRFETL. A helical transmembrane segment spans residues 174–194; it reads VFYWPSLLCLGFLLGRFLHMF. The Cytoplasmic portion of the chain corresponds to 195-258; sequence LKALPVHLGL…CFQFPSRMVG (64 aa). The chain crosses the membrane as a helical span at residues 259-279; that stretch reads TLLLAFICLYLFIVIEFCVFL. Topologically, residues 280 to 321 are extracellular; sequence HVRDKLDMFEDKLESYLTHMNETGTLTPIILQVKELISVTKG. A helical membrane pass occupies residues 322 to 342; that stretch reads VWVVTILPAALTCVTYLFHIL. Topologically, residues 343 to 383 are cytoplasmic; the sequence is ACYRKHMKRLWAGDKHFLPQKFHSPSSAASVVAIARYSGWQ. Residues 384–404 traverse the membrane as a helical segment; the sequence is IAYILWGYLIIHVVQSLCGVM. Over 405–424 the chain is Extracellular; that stretch reads LMYGLVLPIIHHRGLEMLQG. A helical transmembrane segment spans residues 425-445; that stretch reads FGLGVLTLSIVVGLIILQVWI. Topologically, residues 446–476 are cytoplasmic; it reads AGTFFLQPKLGTSDKQKPLALNNRRAFHNFN. The helical transmembrane segment at 477 to 497 threads the bilayer; it reads YFLFFYNVLLGLGACLSRLLI. Topologically, residues 498–621 are extracellular; sequence SCLLGTWLIA…TQILLTCSDC (124 aa). Phosphothreonine is present on T612.

Glycosylated. Highly expressed in liver and small intestine. Also expressed in spleen, kidney, colon, stomach, placenta, adipose tissue and isolated adipocytes.

It localises to the cell membrane. Acts as a high-affinity cell-surface receptor for retinol-binding protein RBP4 and mediates RBP4-dependent retinol uptake in the liver. The chain is Stimulated by retinoic acid gene 6 protein-like from Mus musculus (Mouse).